Consider the following 111-residue polypeptide: Photosystem II reaction center Psb28 protein (111 aa).

It belongs to the Psb28 family. As to quaternary structure, part of the photosystem II complex.

The protein resides in the cellular thylakoid membrane. The sequence is that of Photosystem II reaction center Psb28 protein from Acaryochloris marina (strain MBIC 11017).